The chain runs to 182 residues: ATP-dependent protease subunit HslV (182 aa).

Thr7 is a catalytic residue. Na(+)-binding residues include Gly162, Cys165, and Thr168.

This sequence belongs to the peptidase T1B family. HslV subfamily. A double ring-shaped homohexamer of HslV is capped on each side by a ring-shaped HslU homohexamer. The assembly of the HslU/HslV complex is dependent on binding of ATP.

It is found in the cytoplasm. It carries out the reaction ATP-dependent cleavage of peptide bonds with broad specificity.. With respect to regulation, allosterically activated by HslU binding. In terms of biological role, protease subunit of a proteasome-like degradation complex believed to be a general protein degrading machinery. The polypeptide is ATP-dependent protease subunit HslV (Legionella pneumophila (strain Lens)).